Consider the following 115-residue polypeptide: Large ribosomal subunit protein bL20c (115 aa).

This sequence belongs to the bacterial ribosomal protein bL20 family.

The protein resides in the plastid. Its subcellular location is the chloroplast. Functionally, binds directly to 23S ribosomal RNA and is necessary for the in vitro assembly process of the 50S ribosomal subunit. It is not involved in the protein synthesizing functions of that subunit. The polypeptide is Large ribosomal subunit protein bL20c (Chlorokybus atmophyticus (Soil alga)).